The following is a 49-amino-acid chain: Metallothionein (49 aa).

Positions S1–C16 are beta. A divalent metal cation contacts are provided by C2, C6, C8, C11, C13, C16, C20, C21, C23, C24, C28, C31, C35, C37, C45, C47, and C48. Positions R17–H49 are alpha.

This sequence belongs to the metallothionein superfamily. Type 1 family.

In terms of biological role, metallothioneins have a high content of cysteine residues that bind various heavy metals. The polypeptide is Metallothionein (Phasianus colchicus colchicus (Black-necked pheasant)).